We begin with the raw amino-acid sequence, 987 residues long: Vacuolar membrane protease (987 aa).

At 1–14 (MATRKARNPLAFMP) the chain is on the cytoplasmic side. The chain crosses the membrane as a helical span at residues 15–35 (WPVTILTTAMYLALIIPLLVI). The Vacuolar segment spans residues 36–384 (HHNVPPAPRT…AFAVFRLHTL (349 aa)). N-linked (GlcNAc...) asparagine glycans are attached at residues asparagine 51 and asparagine 117. Residues histidine 167 and aspartate 179 each coordinate Zn(2+). The Proton acceptor role is filled by glutamate 213. The Zn(2+) site is built by glutamate 214, glutamate 239, and histidine 312. A helical transmembrane segment spans residues 385-405 (FALSVTLLIVAPLTLLVTSVI). The Cytoplasmic portion of the chain corresponds to 406–435 (LSRADKMYLFRSSVYSEINDDYIPLRGLRG). The chain crosses the membrane as a helical span at residues 436–456 (FFRFPFLISIPTGVTVGLAYM). The Vacuolar portion of the chain corresponds to 457–466 (VTKVNPFIAH). The helical transmembrane segment at 467 to 487 (SSSYAVWSMMISAWIFLAWFV) threads the bilayer. Residues 488–501 (SRVANSARPSAFHR) lie on the Cytoplasmic side of the membrane. The chain crosses the membrane as a helical span at residues 502–522 (VYTWTWMFVLTWSLMVVCTVY). Residues 523–526 (EHEE) lie on the Vacuolar side of the membrane. The helical transmembrane segment at 527–547 (GLAGGYFIFFYFAGTFLATWI) threads the bilayer. At 548-649 (SYLELFALPT…WSGVLPRWTW (102 aa)) the chain is on the cytoplasmic side. The interval 572–600 (STQGSRLAASGDEHQDDAAEEDPTESTSL) is disordered. A helical membrane pass occupies residues 650–670 (LLQLLITAPVILMLIVPLALL). The Vacuolar portion of the chain corresponds to 671–686 (TTSALSQTGQDGSPQL). Residues 687–707 (LIYLFISCLTALLFAPMLPFI) traverse the membrane as a helical segment. The Cytoplasmic portion of the chain corresponds to 708-715 (HRYTYHLP). Residues 716–736 (IFLLFVFIGTMIYNLVAFPFA) form a helical membrane-spanning segment. The Vacuolar portion of the chain corresponds to 737-987 (DSNRLKLFFL…KRSSLGALGS (251 aa)). Asparagine 781 and asparagine 871 each carry an N-linked (GlcNAc...) asparagine glycan.

The protein belongs to the peptidase M28 family. Requires Zn(2+) as cofactor.

The protein localises to the vacuole membrane. Functionally, may be involved in vacuolar sorting and osmoregulation. In Penicillium rubens (strain ATCC 28089 / DSM 1075 / NRRL 1951 / Wisconsin 54-1255) (Penicillium chrysogenum), this protein is Vacuolar membrane protease.